The chain runs to 730 residues: Regulatory factor X 4 (730 aa).

Residues 30–41 are compositionally biased toward polar residues; the sequence is YSSHTSLGNISN. The tract at residues 30–59 is disordered; it reads YSSHTSLGNISNDETDEEKENRASKPHSTP. The RFX-type winged-helix DNA-binding region spans 61–136; sequence TLQWLGENYE…YHYYGIAVKE (76 aa). Residues 500 to 532 form a disordered region; it reads EPAISTPSPVPFSPAASSSSVEIPSATSPVSNQ. A compositionally biased stretch (low complexity) spans 512–528; sequence SPAASSSSVEIPSATSP.

It belongs to the RFX family.

Its subcellular location is the nucleus. Required for neural tube ciliogenesis during embryogenesis. This is Regulatory factor X 4 from Xenopus laevis (African clawed frog).